Reading from the N-terminus, the 368-residue chain is UDP-N-acetylglucosamine--N-acetylmuramyl-(pentapeptide) pyrophosphoryl-undecaprenol N-acetylglucosamine transferase (368 aa).

UDP-N-acetyl-alpha-D-glucosamine is bound by residues 10–12 (TGG), Asn124, Ser196, Ile251, and Gln296.

The protein belongs to the glycosyltransferase 28 family. MurG subfamily.

The protein resides in the cell membrane. It carries out the reaction Mur2Ac(oyl-L-Ala-gamma-D-Glu-L-Lys-D-Ala-D-Ala)-di-trans,octa-cis-undecaprenyl diphosphate + UDP-N-acetyl-alpha-D-glucosamine = beta-D-GlcNAc-(1-&gt;4)-Mur2Ac(oyl-L-Ala-gamma-D-Glu-L-Lys-D-Ala-D-Ala)-di-trans,octa-cis-undecaprenyl diphosphate + UDP + H(+). The protein operates within cell wall biogenesis; peptidoglycan biosynthesis. Cell wall formation. Catalyzes the transfer of a GlcNAc subunit on undecaprenyl-pyrophosphoryl-MurNAc-pentapeptide (lipid intermediate I) to form undecaprenyl-pyrophosphoryl-MurNAc-(pentapeptide)GlcNAc (lipid intermediate II). This chain is UDP-N-acetylglucosamine--N-acetylmuramyl-(pentapeptide) pyrophosphoryl-undecaprenol N-acetylglucosamine transferase, found in Limosilactobacillus fermentum (strain NBRC 3956 / LMG 18251) (Lactobacillus fermentum).